The primary structure comprises 197 residues: LexA repressor (197 aa).

The segment at residues 28–47 is a DNA-binding region (H-T-H motif); the sequence is VREIARRFRITPRGALLHLI. Catalysis depends on for autocatalytic cleavage activity residues Ser-119 and Lys-156.

Belongs to the peptidase S24 family. As to quaternary structure, homodimer.

It catalyses the reaction Hydrolysis of Ala-|-Gly bond in repressor LexA.. Represses a number of genes involved in the response to DNA damage (SOS response), including recA and lexA. In the presence of single-stranded DNA, RecA interacts with LexA causing an autocatalytic cleavage which disrupts the DNA-binding part of LexA, leading to derepression of the SOS regulon and eventually DNA repair. The protein is LexA repressor of Thermotoga sp. (strain RQ2).